The sequence spans 178 residues: Colicin-A immunity protein (178 aa).

The Cytoplasmic segment spans residues 1-13 (MMNEHSIDTDNRK). A helical membrane pass occupies residues 14–37 (ANNALYLFIIIGLIPLLCIFVVYY). The Periplasmic segment spans residues 38-68 (KTPDALLLRKIATSTENLPSITSSYNPLMTK). Residues 69 to 89 (VMDIYCKTAPFLALILYILTF) traverse the membrane as a helical segment. Over 90 to 105 (KIRKLINNTDRNTVLR) the chain is Cytoplasmic. Residues 106-123 (SCLLSPLVYAAIVYLFCF) form a helical membrane-spanning segment. Residues 124 to 142 (RNFELTTAGRPVRLMATND) are Periplasmic-facing. A helical transmembrane segment spans residues 143-165 (ATLLLFYIGLYSIIFFTTYITLF). Residues 166–178 (TPVTAFKLLKKRQ) lie on the Cytoplasmic side of the membrane.

It localises to the cell inner membrane. Functionally, this protein is able to protect a cell, which harbors the plasmid ColA encoding colicin A, against colicin A. The sequence is that of Colicin-A immunity protein (cai) from Citrobacter freundii.